A 247-amino-acid polypeptide reads, in one-letter code: tRNA pseudouridine synthase A (247 aa).

The active-site Nucleophile is the Asp-52. Tyr-113 is a substrate binding site.

Belongs to the tRNA pseudouridine synthase TruA family. In terms of assembly, homodimer.

The enzyme catalyses uridine(38/39/40) in tRNA = pseudouridine(38/39/40) in tRNA. Functionally, formation of pseudouridine at positions 38, 39 and 40 in the anticodon stem and loop of transfer RNAs. This is tRNA pseudouridine synthase A from Sinorhizobium fredii (strain NBRC 101917 / NGR234).